The following is a 231-amino-acid chain: eRF1 methyltransferase catalytic subunit mtq2 (231 aa).

S-adenosyl-L-methionine is bound by residues Gly-54 to Gly-58, Asp-80, and Asn-130. Residue Asn-130–Tyr-133 participates in substrate binding.

The protein belongs to the eukaryotic/archaeal PrmC-related family. As to quaternary structure, heterodimer of mtq2-trm112. mtq2 is the catalytic subunit carrying the catalytic and the S-adenosyl L-methionine binding sites.

The protein localises to the cytoplasm. It localises to the nucleus. The enzyme catalyses L-glutaminyl-[peptide chain release factor] + S-adenosyl-L-methionine = N(5)-methyl-L-glutaminyl-[peptide chain release factor] + S-adenosyl-L-homocysteine + H(+). Methylates eRF1 on 'Gln-182' using S-adenosyl L-methionine as methyl donor. eRF1 needs to be complexed to eRF3 in its GTP-bound form to be efficiently methylated. This chain is eRF1 methyltransferase catalytic subunit mtq2 (mtq2), found in Schizosaccharomyces pombe (strain 972 / ATCC 24843) (Fission yeast).